Here is a 127-residue protein sequence, read N- to C-terminus: Ribonuclease P protein component (127 aa).

It belongs to the RnpA family. In terms of assembly, consists of a catalytic RNA component (M1 or rnpB) and a protein subunit.

The catalysed reaction is Endonucleolytic cleavage of RNA, removing 5'-extranucleotides from tRNA precursor.. In terms of biological role, RNaseP catalyzes the removal of the 5'-leader sequence from pre-tRNA to produce the mature 5'-terminus. It can also cleave other RNA substrates such as 4.5S RNA. The protein component plays an auxiliary but essential role in vivo by binding to the 5'-leader sequence and broadening the substrate specificity of the ribozyme. This Agrobacterium fabrum (strain C58 / ATCC 33970) (Agrobacterium tumefaciens (strain C58)) protein is Ribonuclease P protein component.